The primary structure comprises 556 residues: Energy-dependent translational throttle protein EttA (556 aa).

ABC transporter domains follow at residues 7-260 (YTMH…EQEQ) and 325-551 (IEVQ…RIKY). 40 to 47 (GLNGAGKS) provides a ligand contact to ATP. Residues 96-140 (SEVKNALTRLDEVYALYADPDADFDKLAAEQANLEAIIQAHDGHN) form an arm region. The segment at 243–323 (GNYSSWLEQK…IPPGPRLGDK (81 aa)) is ptIM. 357–364 (GANGAGKS) is a binding site for ATP.

This sequence belongs to the ABC transporter superfamily. ABCF family. Translational throttle EttA subfamily. Monomer. Probably contacts ribosomal proteins L1, L5, L33 and S7, the 16S and 23S rRNA and the P-site containing tRNA(fMet).

Its subcellular location is the cytoplasm. It carries out the reaction ATP + H2O = ADP + phosphate + H(+). A translation factor that gates the progression of the 70S ribosomal initiation complex (IC, containing tRNA(fMet) in the P-site) into the translation elongation cycle by using a mechanism sensitive to the ATP/ADP ratio. Binds to the 70S ribosome E-site where it modulates the state of the translating ribosome during subunit translocation. ATP hydrolysis probably frees it from the ribosome, which can enter the elongation phase. This is Energy-dependent translational throttle protein EttA from Haemophilus influenzae (strain ATCC 51907 / DSM 11121 / KW20 / Rd).